A 652-amino-acid chain; its full sequence is Putative enzymatic polyprotein (652 aa).

The Peptidase A2 domain occupies 21–99 (YHGLFDTGAN…SPDIIIGATF (79 aa)). Residue D26 is part of the active site. The Reverse transcriptase domain maps to 231 to 413 (FIEEKTNFED…EKIDFLGVQI (183 aa)). Positions 301, 364, and 365 each coordinate Mg(2+).

It catalyses the reaction DNA(n) + a 2'-deoxyribonucleoside 5'-triphosphate = DNA(n+1) + diphosphate. It carries out the reaction Endonucleolytic cleavage to 5'-phosphomonoester.. Its function is as follows. Encodes for at least two polypeptides: protease (PR) and reverse transcriptase (RT). The protease processes the polyprotein in cis. Reverse transcriptase is multifunctional enzyme that converts the viral RNA genome into dsDNA in viral cytoplasmic capsids. This enzyme displays a DNA polymerase activity that can copy either DNA or RNA templates, and a ribonuclease H (RNase H) activity that cleaves the RNA strand of RNA-DNA heteroduplexes in a partially processive 3'- to 5'-endonucleasic mode. Neo-synthesized pregenomic RNA (pgRNA) are encapsidated, and reverse-transcribed inside the nucleocapsid. Partial (+)DNA is synthesized from the (-)DNA template and generates the relaxed circular DNA (RC-DNA) genome. After budding and infection, the RC-DNA migrates in the nucleus, and is converted into a plasmid-like covalently closed circular DNA (cccDNA). This chain is Putative enzymatic polyprotein, found in Cassava vein mosaic virus (CsVMV).